A 594-amino-acid polypeptide reads, in one-letter code: UvrABC system protein C (594 aa).

In terms of domain architecture, GIY-YIG spans 14-91 (DQPGCYLMKD…IKKHDPKYNI (78 aa)). A UVR domain is found at 196 to 231 (KEVRSELETKMYEASEKLEFERAKELRDQIAHIDAI).

The protein belongs to the UvrC family. As to quaternary structure, interacts with UvrB in an incision complex.

The protein localises to the cytoplasm. In terms of biological role, the UvrABC repair system catalyzes the recognition and processing of DNA lesions. UvrC both incises the 5' and 3' sides of the lesion. The N-terminal half is responsible for the 3' incision and the C-terminal half is responsible for the 5' incision. The polypeptide is UvrABC system protein C (Bacillus anthracis (strain A0248)).